Here is a 551-residue protein sequence, read N- to C-terminus: Urocanate hydratase (551 aa).

Residues 48 to 49 (GG), glutamine 126, 172 to 174 (GMG), glutamate 192, arginine 197, 238 to 239 (NA), 259 to 263 (QTSAH), 269 to 270 (YI), and tyrosine 318 each bind NAD(+). Cysteine 406 is an active-site residue. NAD(+) is bound at residue glycine 488.

This sequence belongs to the urocanase family. It depends on NAD(+) as a cofactor.

The protein localises to the cytoplasm. It carries out the reaction 4-imidazolone-5-propanoate = trans-urocanate + H2O. Its pathway is amino-acid degradation; L-histidine degradation into L-glutamate; N-formimidoyl-L-glutamate from L-histidine: step 2/3. Catalyzes the conversion of urocanate to 4-imidazolone-5-propionate. The chain is Urocanate hydratase from Geobacillus kaustophilus (strain HTA426).